Reading from the N-terminus, the 329-residue chain is Malate dehydrogenase (329 aa).

12–18 (GAAGQIG) contacts NAD(+). Arg-93 and Arg-99 together coordinate substrate. Residues Asn-106, Gln-113, and 130–132 (VGN) contribute to the NAD(+) site. Substrate contacts are provided by Asn-132 and Arg-163. The active-site Proton acceptor is the His-188.

This sequence belongs to the LDH/MDH superfamily. MDH type 2 family.

The catalysed reaction is (S)-malate + NAD(+) = oxaloacetate + NADH + H(+). Catalyzes the reversible oxidation of malate to oxaloacetate. The protein is Malate dehydrogenase of Streptomyces griseus subsp. griseus (strain JCM 4626 / CBS 651.72 / NBRC 13350 / KCC S-0626 / ISP 5235).